A 2098-amino-acid chain; its full sequence is 1-phosphatidylinositol 3-phosphate 5-kinase (2098 aa).

The interval 1-45 (MATDDKTSPTLDSANDLPRSPTSPSHLTHFKPLTPDQDEPPFKSA) is disordered. An N-acetylalanine modification is found at alanine 2. Phosphoserine; by autocatalysis occurs at positions 23 and 48. The disordered stretch occupies residues 57-123 (KERAEGGQGE…EPTFGGHDPR (67 aa)). The segment covering 66 to 88 (EQQPLSGSWTSPQLPSRTQSVRS) has biased composition (polar residues). A Phosphoserine modification is found at serine 88. The segment at 158 to 218 (DSQCKECYDC…ACTYCRKIAL (61 aa)) adopts an FYVE-type zinc-finger fold. 8 residues coordinate Zn(2+): cysteine 164, cysteine 167, cysteine 180, cysteine 183, cysteine 188, cysteine 191, cysteine 210, and cysteine 213. Positions 292 to 329 (VQEDAGKSPARNRSASITNLSLDRSGSPMVPSYETSVS) are disordered. Phosphoserine is present on residues serine 299, serine 307, and serine 312. Residues 302 to 315 (RNRSASITNLSLDR) show a composition bias toward polar residues. Position 318 is a phosphoserine; by PKB/AKT1 or PKB/AKT2 (serine 318). The residue at position 329 (serine 329) is a Phosphoserine. Residues 365 to 440 (HSSGMEFQDH…DEYALYRPLQ (76 aa)) form the DEP domain. A compositionally biased stretch (polar residues) spans 442-459 (TEFSETPSPDSDSVNSVE). The tract at residues 442 to 469 (TEFSETPSPDSDSVNSVEGHSEPSWFKD) is disordered. The span at 460-469 (GHSEPSWFKD) shows a compositional bias: basic and acidic residues. Serine 475 bears the Phosphoserine mark. Positions 484-505 (GDDNLANSASPSKRTSVSSFQS) are disordered. Over residues 488–505 (LANSASPSKRTSVSSFQS) the composition is skewed to polar residues. The segment at 616 to 868 (MMALLQQLLH…MICVAYHSQL (253 aa)) is chaperonin-like domain. Disordered stretches follow at residues 1161 to 1191 (RIQP…NEGD) and 1512 to 1616 (FQQE…STDS). The span at 1177 to 1186 (SSTSSGQSGS) shows a compositional bias: low complexity. Serine 1522 bears the Phosphoserine; by autocatalysis mark. Phosphoserine is present on residues serine 1544 and serine 1549. Residues 1562-1578 (LTTLSSQSSTSSTHLQL) show a composition bias toward low complexity. Serine 1669 bears the Phosphoserine; by autocatalysis mark. Residues 1692–1799 (QWNSAEEGLP…PQDEVDGGDT (108 aa)) are disordered. Residues 1704–1714 (STSDSRPKSSS) show a composition bias toward low complexity. Residues 1723 to 1735 (GGQTNRTTETEPQ) show a composition bias toward polar residues. Serine 1754 bears the Phosphoserine mark. The PIPK domain occupies 1758-2084 (SSQKRETLRG…RFCEAMDKYF (327 aa)). Residues 1842 to 2098 (EEDFIRSLSH…DHWTGLGLNC (257 aa)) are catalytic. Phosphoserine; by autocatalysis occurs at positions 1969 and 2053.

As to quaternary structure, component of the PI(3,5)P2 regulatory complex/PAS complex, at least composed of PIKFYVE, FIG4 and VAC14. VAC14 nucleates the assembly of the complex and serves as a scaffold by pentamerizing into a star-shaped structure, which can bind a single copy each of PIKFYVE and FIG4 and coordinates their activities. Interacts (via chaperonin-like domain) with RABEPK; the interaction recruits RABEPK to the endosomal membrane. Interacts with SPAG9. Interacts with EGFR. Autophosphorylates which inhibits its own phosphatidylinositol 3-phosphate 5-kinase activity, stimulates FIG4 lipid phosphatase activity and down-regulates lipid product formation. Dephosphorylated by FIG4 in the PI(3,5)P2 regulatory complex, at Ser-48, Ser-1669 and Ser-2053. Phosphorylated in response to insulin at Ser-318 in a protein kinase B (PKB)-dependent manner.

Its subcellular location is the endosome membrane. The protein resides in the early endosome membrane. It localises to the cytoplasmic vesicle. The protein localises to the phagosome membrane. It is found in the late endosome membrane. It catalyses the reaction a 1,2-diacyl-sn-glycero-3-phospho-(1D-myo-inositol-3-phosphate) + ATP = a 1,2-diacyl-sn-glycero-3-phospho-(1D-myo-inositol-3,5-bisphosphate) + ADP + H(+). It carries out the reaction a 1,2-diacyl-sn-glycero-3-phospho-(1D-myo-inositol) + ATP = a 1,2-diacyl-sn-glycero-3-phospho-(1D-myo-inositol-5-phosphate) + ADP + H(+). The catalysed reaction is L-seryl-[protein] + ATP = O-phospho-L-seryl-[protein] + ADP + H(+). Its activity is regulated as follows. Inhibited by apilimod and YM201636. In terms of biological role, dual specificity kinase implicated in myriad essential cellular processes such as maintenance of endomembrane homeostasis, and endocytic-vacuolar pathway, lysosomal trafficking, nuclear transport, stress- or hormone-induced signaling and cell cycle progression. The PI(3,5)P2 regulatory complex regulates both the synthesis and turnover of phosphatidylinositol 3,5-bisphosphate (PtdIns(3,5)P2). Sole enzyme to catalyze the phosphorylation of phosphatidylinositol 3-phosphate on the fifth hydroxyl of the myo-inositol ring, to form (PtdIns(3,5)P2). Also catalyzes the phosphorylation of phosphatidylinositol on the fifth hydroxyl of the myo-inositol ring, to form phosphatidylinositol 5-phosphate (PtdIns(5)P). Has serine-protein kinase activity and is able to autophosphorylate and transphosphorylate. Autophosphorylation inhibits its own phosphatidylinositol 3-phosphate 5-kinase activity, stimulates FIG4 lipid phosphatase activity and down-regulates lipid product formation. Involved in key endosome operations such as fission and fusion in the course of endosomal cargo transport. Required for the maturation of early into late endosomes, phagosomes and lysosomes. Regulates vacuole maturation and nutrient recovery following engulfment of macromolecules, initiates the redistribution of accumulated lysosomal contents back into the endosome network. Critical regulator of the morphology, degradative activity, and protein turnover of the endolysosomal system in macrophages and platelets. In neutrophils, critical to perform chemotaxis, generate ROS, and undertake phagosome fusion with lysosomes. Plays a key role in the processing and presentation of antigens by major histocompatibility complex class II (MHC class II) mediated by CTSS. Regulates melanosome biogenesis by controlling the delivery of proteins from the endosomal compartment to the melanosome. Essential for systemic glucose homeostasis, mediates insulin-induced signals for endosome/actin remodeling in the course of GLUT4 translocation/glucose uptake activation. Supports microtubule-based endosome-to-trans-Golgi network cargo transport, through association with SPAG9 and RABEPK. Mediates EGFR trafficking to the nucleus. (Microbial infection) Required for cell entry of coronaviruses SARS-CoV and SARS-CoV-2, as well as human coronavirus EMC (HCoV-EMC) by endocytosis. This chain is 1-phosphatidylinositol 3-phosphate 5-kinase, found in Homo sapiens (Human).